Reading from the N-terminus, the 213-residue chain is 2,3-bisphosphoglycerate-dependent phosphoglycerate mutase (213 aa).

Residues 8–15 (RHGQSEWN), 21–22 (TG), arginine 58, 84–87 (ERNY), lysine 95, 111–112 (RR), and 155–156 (GN) contribute to the substrate site. The Tele-phosphohistidine intermediate role is filled by histidine 9. The active-site Proton donor/acceptor is glutamate 84.

The protein belongs to the phosphoglycerate mutase family. BPG-dependent PGAM subfamily.

It catalyses the reaction (2R)-2-phosphoglycerate = (2R)-3-phosphoglycerate. It functions in the pathway carbohydrate degradation; glycolysis; pyruvate from D-glyceraldehyde 3-phosphate: step 3/5. In terms of biological role, catalyzes the interconversion of 2-phosphoglycerate and 3-phosphoglycerate. The sequence is that of 2,3-bisphosphoglycerate-dependent phosphoglycerate mutase from Cytophaga hutchinsonii (strain ATCC 33406 / DSM 1761 / CIP 103989 / NBRC 15051 / NCIMB 9469 / D465).